The sequence spans 316 residues: Coproporphyrin III ferrochelatase (316 aa).

Residues Tyr-13, Arg-30, 46–47, Ser-54, and Tyr-125 each bind Fe-coproporphyrin III; that span reads RY. Fe(2+) contacts are provided by His-183 and Glu-264.

It belongs to the ferrochelatase family.

The protein resides in the cytoplasm. It carries out the reaction Fe-coproporphyrin III + 2 H(+) = coproporphyrin III + Fe(2+). The protein operates within porphyrin-containing compound metabolism; protoheme biosynthesis. Involved in coproporphyrin-dependent heme b biosynthesis. Catalyzes the insertion of ferrous iron into coproporphyrin III to form Fe-coproporphyrin III. This is Coproporphyrin III ferrochelatase from Geobacillus thermodenitrificans (strain NG80-2).